The following is a 335-amino-acid chain: Peroxidase 53 (335 aa).

A signal peptide spans 1 to 30 (MAVTNLPTCDGLFIISLIVIVSSIFGTSSA). A Pyrrolidone carboxylic acid modification is found at Q31. Residues N33 and N43 are each glycosylated (N-linked (GlcNAc...) asparagine). 4 cysteine pairs are disulfide-bonded: C41-C121, C74-C79, C127-C329, and C206-C238. Residue H72 is the Proton acceptor of the active site. Positions 73, 76, 78, 80, and 82 each coordinate Ca(2+). An N-linked (GlcNAc...) asparagine glycan is attached at N165. Residue P169 coordinates substrate. N177 carries N-linked (GlcNAc...) asparagine glycosylation. Residue H199 participates in heme b binding. T200 serves as a coordination point for Ca(2+). Residues N215, N227, and N241 are each glycosylated (N-linked (GlcNAc...) asparagine). Residues D251, T254, and D259 each coordinate Ca(2+). Residue N297 is glycosylated (N-linked (GlcNAc...) asparagine).

Belongs to the peroxidase family. Classical plant (class III) peroxidase subfamily. Ca(2+) serves as cofactor. The cofactor is heme b. In terms of tissue distribution, mainly expressed in roots.

Its subcellular location is the secreted. It catalyses the reaction 2 a phenolic donor + H2O2 = 2 a phenolic radical donor + 2 H2O. Removal of H(2)O(2), oxidation of toxic reductants, biosynthesis and degradation of lignin, suberization, auxin catabolism, response to environmental stresses such as wounding, pathogen attack and oxidative stress. These functions might be dependent on each isozyme/isoform in each plant tissue. Its function is as follows. Closely linked to lignin formation by showing monolignol substrate specificity. The chain is Peroxidase 53 (PER53) from Arabidopsis thaliana (Mouse-ear cress).